A 337-amino-acid polypeptide reads, in one-letter code: ATP-dependent 6-phosphofructokinase (337 aa).

Gly11 is an ATP binding site. 21-25 (RAVVR) is an ADP binding site. Residues 72–73 (RY) and 102–105 (GDGS) contribute to the ATP site. Mg(2+) is bound at residue Asp103. 125–127 (TID) serves as a coordination point for substrate. Asp127 acts as the Proton acceptor in catalysis. ADP is bound at residue Arg154. Substrate-binding positions include Arg162 and 169 to 171 (MGR). ADP is bound by residues 185–187 (GAD), Lys212, and 214–216 (KNH). Residues Glu223, Arg245, and 251–254 (HILR) each bind substrate.

This sequence belongs to the phosphofructokinase type A (PFKA) family. ATP-dependent PFK group I subfamily. Prokaryotic clade 'B1' sub-subfamily. In terms of assembly, homotetramer. The cofactor is Mg(2+).

It is found in the cytoplasm. The enzyme catalyses beta-D-fructose 6-phosphate + ATP = beta-D-fructose 1,6-bisphosphate + ADP + H(+). Its pathway is carbohydrate degradation; glycolysis; D-glyceraldehyde 3-phosphate and glycerone phosphate from D-glucose: step 3/4. With respect to regulation, allosterically activated by ADP and other diphosphonucleosides, and allosterically inhibited by phosphoenolpyruvate. Functionally, catalyzes the phosphorylation of D-fructose 6-phosphate to fructose 1,6-bisphosphate by ATP, the first committing step of glycolysis. The protein is ATP-dependent 6-phosphofructokinase of Streptococcus pyogenes serotype M3 (strain SSI-1).